The chain runs to 594 residues: MLPAQKHTLETLLENSVKQVVQASKGDADAAFVLPAIALERPKVAAHGDVACNVALQLAKPLGANPRQLAEQIVAALTAQPEAAGLVDAAEIAGPGFINLRLTPASKQAVIGAVLAQGRAFGASERDHDKRVLLEFVSANPTGPLHVGHGRQAALGDALANVLASQGYAVHREFYYNDAGVQIGNLAISTQARARGLKPGDAGWPEAAYNGEYIADIARDYLNGETVAASDGEPVTGKRDVEDLEAIRKFAVTYLRREQDMDLKAFGVKFDQYYLESSLYTEGRVEKTVDALIAAGMTYEQEGALWLRTTDEGDDKDRVMRKTDGTYTYFVPDVAYHVTKWERGFTKVINIQGSDHHGTIARVRAGLQGLHIGIPKGYPDYVLHKMVTVMRDGQEVKISKRAGSYVTVRDLIEWSGGATPGSEGSPELLDEATITRGRDAVRFFLISRKADTEFVFDIDLALKQNDENPVYYVQYAHARICSVINEWKSRYGATDALLPGADLSPLDSKQAMALMQKLAEYPDVLAHAAGELAPHAVAFYLRELASEFHSFYNAERVLVDEQAPRTARVALLAATRQVLENGLAMLGVSAPSKM.

A 'HIGH' region motif is present at residues 139–149 (ANPTGPLHVGH).

Belongs to the class-I aminoacyl-tRNA synthetase family. In terms of assembly, monomer.

The protein localises to the cytoplasm. The enzyme catalyses tRNA(Arg) + L-arginine + ATP = L-arginyl-tRNA(Arg) + AMP + diphosphate. In Burkholderia mallei (strain NCTC 10247), this protein is Arginine--tRNA ligase.